Here is a 473-residue protein sequence, read N- to C-terminus: Photosystem II CP43 reaction center protein (473 aa).

A propeptide spanning residues 1 to 14 is cleaved from the precursor; sequence MKILYSQRRFYHVE. Residue Thr-15 is modified to N-acetylthreonine. The residue at position 15 (Thr-15) is a Phosphothreonine. 5 helical membrane-spanning segments follow: residues 69-93, 134-155, 178-200, 255-275, and 291-312; these read LFEV…PHLA, LIGP…KDKN, KALY…RKIT, KPFA…LSYS, and WFNN…ASQA. A [CaMn4O5] cluster-binding site is contributed by Glu-367. A helical membrane pass occupies residues 447–471; sequence RARAAAAGFEKGIDRDFEPVLSMTP.

This sequence belongs to the PsbB/PsbC family. PsbC subfamily. In terms of assembly, PSII is composed of 1 copy each of membrane proteins PsbA, PsbB, PsbC, PsbD, PsbE, PsbF, PsbH, PsbI, PsbJ, PsbK, PsbL, PsbM, PsbT, PsbX, PsbY, PsbZ, Psb30/Ycf12, at least 3 peripheral proteins of the oxygen-evolving complex and a large number of cofactors. It forms dimeric complexes. The cofactor is Binds multiple chlorophylls and provides some of the ligands for the Ca-4Mn-5O cluster of the oxygen-evolving complex. It may also provide a ligand for a Cl- that is required for oxygen evolution. PSII binds additional chlorophylls, carotenoids and specific lipids..

The protein resides in the plastid. It is found in the chloroplast thylakoid membrane. In terms of biological role, one of the components of the core complex of photosystem II (PSII). It binds chlorophyll and helps catalyze the primary light-induced photochemical processes of PSII. PSII is a light-driven water:plastoquinone oxidoreductase, using light energy to abstract electrons from H(2)O, generating O(2) and a proton gradient subsequently used for ATP formation. The chain is Photosystem II CP43 reaction center protein from Physcomitrium patens (Spreading-leaved earth moss).